The sequence spans 353 residues: Histidinol-phosphate aminotransferase (353 aa).

N6-(pyridoxal phosphate)lysine is present on K214.

This sequence belongs to the class-II pyridoxal-phosphate-dependent aminotransferase family. Histidinol-phosphate aminotransferase subfamily. As to quaternary structure, homodimer. The cofactor is pyridoxal 5'-phosphate.

It carries out the reaction L-histidinol phosphate + 2-oxoglutarate = 3-(imidazol-4-yl)-2-oxopropyl phosphate + L-glutamate. It participates in amino-acid biosynthesis; L-histidine biosynthesis; L-histidine from 5-phospho-alpha-D-ribose 1-diphosphate: step 7/9. This Gloeobacter violaceus (strain ATCC 29082 / PCC 7421) protein is Histidinol-phosphate aminotransferase.